A 428-amino-acid chain; its full sequence is 3-phosphoshikimate 1-carboxyvinyltransferase (428 aa).

The 3-phosphoshikimate site is built by Lys22, Ser23, and Arg27. Lys22 lines the phosphoenolpyruvate pocket. Residues Gly96 and Arg124 each coordinate phosphoenolpyruvate. Residues Ser170, Ser171, Gln172, Ser198, Asp314, Asn337, and Lys341 each coordinate 3-phosphoshikimate. Phosphoenolpyruvate is bound at residue Gln172. The active-site Proton acceptor is the Asp314. Phosphoenolpyruvate-binding residues include Arg345, Arg387, and Lys412.

It belongs to the EPSP synthase family. Monomer.

Its subcellular location is the cytoplasm. It catalyses the reaction 3-phosphoshikimate + phosphoenolpyruvate = 5-O-(1-carboxyvinyl)-3-phosphoshikimate + phosphate. The protein operates within metabolic intermediate biosynthesis; chorismate biosynthesis; chorismate from D-erythrose 4-phosphate and phosphoenolpyruvate: step 6/7. Functionally, catalyzes the transfer of the enolpyruvyl moiety of phosphoenolpyruvate (PEP) to the 5-hydroxyl of shikimate-3-phosphate (S3P) to produce enolpyruvyl shikimate-3-phosphate and inorganic phosphate. In Shewanella amazonensis (strain ATCC BAA-1098 / SB2B), this protein is 3-phosphoshikimate 1-carboxyvinyltransferase.